Consider the following 669-residue polypeptide: CoB--CoM heterodisulfide reductase iron-sulfur subunit A 1 (669 aa).

Residue 153-176 (GGGIAGIQAALDLADQGFKVYLVE) participates in FAD binding. A non-standard amino acid (selenocysteine) is located at residue U200. 4 4Fe-4S ferredoxin-type domains span residues 239 to 270 (KKPRYVDEDACTGCGVCAEVCPIEVPNEFDLG), 287 to 318 (LVYTIDMEHCIQCGLCEEACPQDPPAIDFDQE), 584 to 613 (ITATVDEDVCGGCGACAQVCPFDAIEMVEK), and 617 to 646 (RVAEVQDVACQGCGQCAAACPSGAMQLRYY). [4Fe-4S] cluster-binding residues include C249, C252, C255, C259, C296, C299, C302, C306, C593, C596, C599, C603, C626, C629, C632, and C636.

It belongs to the HdrA family. As to quaternary structure, the ferredoxin:CoB-CoM heterodisulfide reductase is composed of three subunits; HdrA, HdrB and HdrC. [4Fe-4S] cluster is required as a cofactor. Requires FAD as cofactor.

It participates in cofactor metabolism; coenzyme M-coenzyme B heterodisulfide reduction; coenzyme B and coenzyme M from coenzyme M-coenzyme B heterodisulfide: step 1/1. In terms of biological role, part of a complex that catalyzes the reversible reduction of CoM-S-S-CoB to the thiol-coenzymes H-S-CoM (coenzyme M) and H-S-CoB (coenzyme B). The protein is CoB--CoM heterodisulfide reductase iron-sulfur subunit A 1 (hdrA1) of Methanopyrus kandleri (strain AV19 / DSM 6324 / JCM 9639 / NBRC 100938).